The primary structure comprises 139 residues: ATP synthase epsilon chain (139 aa).

The protein belongs to the ATPase epsilon chain family. As to quaternary structure, F-type ATPases have 2 components, CF(1) - the catalytic core - and CF(0) - the membrane proton channel. CF(1) has five subunits: alpha(3), beta(3), gamma(1), delta(1), epsilon(1). CF(0) has three main subunits: a, b and c.

Its subcellular location is the cell inner membrane. Produces ATP from ADP in the presence of a proton gradient across the membrane. The sequence is that of ATP synthase epsilon chain from Serratia proteamaculans (strain 568).